A 549-amino-acid chain; its full sequence is Glucose-6-phosphate isomerase (549 aa).

The Proton donor role is filled by glutamate 353. Active-site residues include histidine 384 and lysine 513.

This sequence belongs to the GPI family.

The protein localises to the cytoplasm. It catalyses the reaction alpha-D-glucose 6-phosphate = beta-D-fructose 6-phosphate. The protein operates within carbohydrate biosynthesis; gluconeogenesis. Its pathway is carbohydrate degradation; glycolysis; D-glyceraldehyde 3-phosphate and glycerone phosphate from D-glucose: step 2/4. Its function is as follows. Catalyzes the reversible isomerization of glucose-6-phosphate to fructose-6-phosphate. The sequence is that of Glucose-6-phosphate isomerase from Bartonella bacilliformis (strain ATCC 35685 / KC583 / Herrer 020/F12,63).